The primary structure comprises 349 residues: C-X-C chemokine receptor type 1 (349 aa).

Topologically, residues 1 to 44 (MAEAEYFIWIAPEGDFEEEFGNITRMLPTGEYFSPCKRVPMTNR) are extracellular. Asn22 carries N-linked (GlcNAc...) asparagine glycosylation. The helical transmembrane segment at 45–71 (QAVVVFYALVFLLSLLGNSLVMLVILY) threads the bilayer. The Cytoplasmic portion of the chain corresponds to 72 to 80 (RRRTRSVTD). The helical transmembrane segment at 81–101 (VYVLNLAIADLLFSLTLPFLA) threads the bilayer. Residues 102–116 (VSKWKGWIFGTPLCK) are Extracellular-facing. A disulfide bond links Cys115 and Cys192. Residues 117–138 (MVSLLKEVNFFSGILLLACISV) traverse the membrane as a helical segment. The Cytoplasmic portion of the chain corresponds to 139-159 (DRYLAIVHATRTLTRKRYLVK). A helical transmembrane segment spans residues 160 to 179 (FVCMGTWGLSLVLSLPFAIF). Over 180–204 (RQAYKPYRSGTVCYEVLGEATADLR) the chain is Extracellular. Residues 205 to 225 (ITLRGLSHIFGFLLPLFIMLV) form a helical membrane-spanning segment. The Cytoplasmic portion of the chain corresponds to 226–247 (CYGLTLRTLFKAHMRQKRRAMW). A helical transmembrane segment spans residues 248–269 (VIFAVVLVFLLCCLPYNLVLLS). Residues 270–290 (DTLLGAHLIQDTCERRNNIDQ) are Extracellular-facing. Residues 291–313 (ALYITEILGFSHSCLNPVIYAFV) form a helical membrane-spanning segment. Topologically, residues 314–349 (GQSFRHEFLKILANLVHKEVLTHHSASFRTSLTTIY) are cytoplasmic.

The protein belongs to the G-protein coupled receptor 1 family. In terms of assembly, interacts with IL8. Interacts with GNAI2.

Its subcellular location is the cell membrane. Receptor to interleukin-8, which is a powerful neutrophils chemotactic factor. Binding of IL-8 to the receptor causes activation of neutrophils. This response is mediated via a G-protein that activates a phosphatidylinositol-calcium second messenger system. This Rattus norvegicus (Rat) protein is C-X-C chemokine receptor type 1 (Cxcr1).